We begin with the raw amino-acid sequence, 423 residues long: GTPase Obg (423 aa).

One can recognise an Obg domain in the interval 1 to 158 (MFIDTARIYI…MWVRLELKLL (158 aa)). In terms of domain architecture, OBG-type G spans 159-329 (ADVGLIGFPN…LLDKTIEILS (171 aa)). GTP contacts are provided by residues 165–172 (GFPNAGKS), 190–194 (FTTLT), 211–214 (DIPG), 281–284 (NKID), and 310–312 (SAL). Positions 172 and 192 each coordinate Mg(2+). Residues 346–423 (TPPEEEETLN…VRDFEFEYYE (78 aa)) form the OCT domain.

It belongs to the TRAFAC class OBG-HflX-like GTPase superfamily. OBG GTPase family. Monomer. The cofactor is Mg(2+).

The protein resides in the cytoplasm. In terms of biological role, an essential GTPase which binds GTP, GDP and possibly (p)ppGpp with moderate affinity, with high nucleotide exchange rates and a fairly low GTP hydrolysis rate. Plays a role in control of the cell cycle, stress response, ribosome biogenesis and in those bacteria that undergo differentiation, in morphogenesis control. The sequence is that of GTPase Obg from Thermoanaerobacter pseudethanolicus (strain ATCC 33223 / 39E) (Clostridium thermohydrosulfuricum).